The sequence spans 375 residues: Kininogen (375 aa).

An N-terminal signal peptide occupies residues 1–23; it reads MKLGVRLCVLVVFSLQLWGPGQG. Cystatin kininogen-type domains follow at residues 35–139 and 156–260; these read CDDK…VEAP and VESE…GPLD. N-linked (GlcNAc) asparagine glycosylation is present at Asn74. 4 cysteine pairs are disulfide-bonded: Cys91–Cys102, Cys115–Cys133, Cys211–Cys223, and Cys234–Cys254. N-linked (GlcNAc) asparagine glycosylation occurs at Asn235. The tract at residues 283–375 is disordered; that stretch reads EVKTTQASTA…LSDLDLLGKK (93 aa).

Post-translationally, N-glycosylated, with sialylated biantennary complex-type glycans. O-glycosylated, sialylated oligosaccharides. In terms of processing, bradykinin is released from kininogen by kallikrein. Post-translationally, the N-terminus is blocked. In terms of tissue distribution, expressed in the skin, liver, intestine, spleen, pancreas and kidney.

The protein resides in the cytoplasm. It localises to the vacuole. Functionally, inhibits papain and ficin (cysteine proteinases) but not trypsin (a serine proteinase). The chain is Kininogen (LOC106584303) from Salmo salar (Atlantic salmon).